We begin with the raw amino-acid sequence, 758 residues long: 1-phosphatidylinositol 4,5-bisphosphate phosphodiesterase delta-4 (758 aa).

The 109-residue stretch at 16–124 folds into the PH domain; sequence QLMQAGSPMR…WIQGLEKLIE (109 aa). The interval 26–53 is substrate binding; it reads KVKSRSWKKQRYFKLQEDCMTIWYNSKK. 3 EF-hand domains span residues 134–169, 170–205, and 206–237; these read LMDQ…MNVD, MSEH…LTQR, and DEVL…GQLE. Aspartate 147, asparagine 149, aspartate 151, arginine 153, glutamate 158, aspartate 183, serine 185, serine 187, threonine 189, and glutamate 194 together coordinate Ca(2+). The short motif at 213–243 is the GBA element; that stretch reads QDFSKDGKKLTLLEFVDFLQQGQLEEENTEE. In terms of domain architecture, PI-PLC X-box spans 290–435; it reads QDMMQPLCHY…LRGKILLKGK (146 aa). The active site involves histidine 305. 3 residues coordinate Ca(2+): asparagine 306, glutamate 335, and aspartate 337. Residue histidine 350 is part of the active site. Residue glutamate 384 participates in Ca(2+) binding. Substrate is bound by residues lysine 433 and lysine 435. Positions 446-468 are enriched in acidic residues; that stretch reads EQPDDSLGEVSDEEENIEVEEER. A disordered region spans residues 446–479; sequence EQPDDSLGEVSDEEENIEVEEERNEDKKRAKKSK. The PI-PLC Y-box domain occupies 486–602; the sequence is LSDCVIYCKS…GYVLKPSFMR (117 aa). The substrate site is built by serine 515 and arginine 542. One can recognise a C2 domain in the interval 602–731; that stretch reads RHVETTFNPD…SGYRHIHLLS (130 aa). 6 residues coordinate Ca(2+): isoleucine 645, aspartate 647, asparagine 671, aspartate 700, tyrosine 701, and aspartate 702. Residues 726-729 carry the PDZ-binding motif; it reads HIHL.

Requires Ca(2+) as cofactor.

The protein localises to the membrane. It localises to the nucleus. The protein resides in the cytoplasm. Its subcellular location is the endoplasmic reticulum. It catalyses the reaction a 1,2-diacyl-sn-glycero-3-phospho-(1D-myo-inositol-4,5-bisphosphate) + H2O = 1D-myo-inositol 1,4,5-trisphosphate + a 1,2-diacyl-sn-glycerol + H(+). The catalysed reaction is a 1,2-diacyl-sn-glycero-3-phospho-(1D-myo-inositol) + H2O = 1D-myo-inositol 1-phosphate + a 1,2-diacyl-sn-glycerol + H(+). Its function is as follows. Hydrolyzes the phosphatidylinositol 4,5-bisphosphate (PIP2) to generate 2 second messenger molecules diacylglycerol (DAG) and inositol 1,4,5-trisphosphate (IP3). DAG mediates the activation of protein kinase C (PKC), while IP3 releases Ca(2+) from intracellular stores. This is 1-phosphatidylinositol 4,5-bisphosphate phosphodiesterase delta-4 (plcd4) from Xenopus laevis (African clawed frog).